A 418-amino-acid polypeptide reads, in one-letter code: MIFSSLFSVVGMAVLFLIAWVFSSNKRAINYRTIVSAFVIQVALGALALYVPLGREMLQGLASGIQSVISYGYEGVRFLFGNLAPNAKGDQGIGGFVFAINVLAIIIFFASLISLLYYLKIMPLFINLIGGALQKCLGTSRAESMSAAANIFVAHTEAPLVIKPYLKSMSDSEIFAVMCVGMASVAGPVLAGYASMGIPLPYLIAASFMSAPGGLLFAKIIYPQNETISSHADVSIEKHVNAIEAIANGASTGLNLALHVGAMLLAFVGMLALINGLLGVVGGFLGMEHLSLGLILGTLLKPLAFMLGIPWSQAGIAGEIIGIKIALNEFVGYMQLLPYLGDNPPLILSEKTKAIITFALCGFANLSSVAMLIGGLGSLVPKKKDLIVRLALKAVLVGTLSNFMSATIAGLFIGLNAH.

A run of 9 helical transmembrane segments spans residues 2 to 22 (IFSS…AWVF), 34 to 54 (IVSA…VPLG), 93 to 113 (IGGF…ASLI), 174 to 194 (IFAV…AGYA), 198 to 218 (IPLP…LLFA), 264 to 284 (LLAF…VGGF), 292 to 314 (LGLI…WSQA), 354 to 374 (AIIT…MLIG), and 395 to 415 (VLVG…FIGL).

This sequence belongs to the concentrative nucleoside transporter (CNT) (TC 2.A.41) family.

It localises to the cell inner membrane. Its function is as follows. Involved in purine nucleosides uptake. Could also be involved in uptake of nucleobases. The chain is Nucleoside permease NupC from Helicobacter pylori (strain ATCC 700392 / 26695) (Campylobacter pylori).